We begin with the raw amino-acid sequence, 309 residues long: NAD kinase (309 aa).

Asp89 serves as the catalytic Proton acceptor. NAD(+)-binding positions include 89 to 90 (DG), 163 to 164 (NE), His174, Arg191, Asp193, and 204 to 209 (TAYALS).

It belongs to the NAD kinase family. A divalent metal cation serves as cofactor.

It localises to the cytoplasm. It carries out the reaction NAD(+) + ATP = ADP + NADP(+) + H(+). Involved in the regulation of the intracellular balance of NAD and NADP, and is a key enzyme in the biosynthesis of NADP. Catalyzes specifically the phosphorylation on 2'-hydroxyl of the adenosine moiety of NAD to yield NADP. This is NAD kinase from Shewanella sp. (strain ANA-3).